The following is a 2144-amino-acid chain: Reducing polyketide synthase PKS2 (2144 aa).

The Ketosynthase family 3 (KS3) domain maps to 10–436; sequence PMPLAIIGMS…GSNSHCIVRA (427 aa). Active-site for beta-ketoacyl synthase activity residues include Cys-183, His-319, and His-360. Residues 538–855 form a malonyl-CoA:ACP transacylase (MAT) region; the sequence is VFAFTGQGAQ…VPSLHRGQNA (318 aa). Positions 924–1058 are N-terminal hotdog fold; that stretch reads HDLLGSINSS…ALVKCEATTD (135 aa). Positions 924 to 1214 are dehydratase (DH) domain; the sequence is HDLLGSINSS…RSYSIDGTTD (291 aa). In terms of domain architecture, PKS/mFAS DH spans 924–1237; sequence HDLLGSINSS…LAVEATLAPQ (314 aa). The tract at residues 1076-1237 is C-terminal hotdog fold; sequence HSCVGSPLLY…LAVEATLAPQ (162 aa). An enoyl reductase (ER) domain region spans residues 1461–1747; it reads GMPDSLYLQR…SETDSKKLLL (287 aa). The ketoreductase (KR) domain stretch occupies residues 1771-1948; the sequence is AVYLLVGGSG…PATSLALTAV (178 aa). The Carrier domain occupies 2059-2136; it reads EATQLLLAAI…KIVDSVIVKR (78 aa). Ser-2096 is subject to O-(pantetheine 4'-phosphoryl)serine.

Its pathway is mycotoxin biosynthesis. Its function is as follows. Reducing polyketide synthase (PKS); part of the Tox1A locus, one of the 2 loci that mediate the biosynthesis of T-toxin, a family of linear polyketides 37 to 45 carbons in length, of which the major component is 41 carbons, and which leads to high virulence to maize. One of the PKSs (PKS1 or PKS2) could synthesize a precursor, used subsequently by the other PKS as starter unit, to add additional carbons. Variability in the length of the final carbon backbone C35-47 could be achieved by varying the number of condensation cycles, or use of different starter or extender units or might be due to decarboxylation of the penultimate product, catalyzed by DEC1. Additional proteins are required for the biosynthesis of T-toxin, including oxidoreductases RED1, RED2, RED3, LAM1 and OXI1, as well as esterase TOX9. The protein is Reducing polyketide synthase PKS2 of Cochliobolus heterostrophus (strain C4 / ATCC 48331 / race T) (Southern corn leaf blight fungus).